The primary structure comprises 501 residues: Cytochrome P450 4c21 (501 aa).

Positions 309 and 447 each coordinate heme.

This sequence belongs to the cytochrome P450 family. Requires heme as cofactor.

It localises to the endoplasmic reticulum membrane. It is found in the microsome membrane. The catalysed reaction is an organic molecule + reduced [NADPH--hemoprotein reductase] + O2 = an alcohol + oxidized [NADPH--hemoprotein reductase] + H2O + H(+). This chain is Cytochrome P450 4c21 (CYP4C21), found in Blattella germanica (German cockroach).